A 268-amino-acid polypeptide reads, in one-letter code: Membrane lipoprotein TpN32 (268 aa).

Positions Met1–Ala23 are cleaved as a signal peptide. Cys24 is lipidated: N-palmitoyl cysteine. Cys24 carries S-diacylglycerol cysteine lipidation.

The protein belongs to the NlpA lipoprotein family.

The protein localises to the cell membrane. This Treponema pallidum (strain Nichols) protein is Membrane lipoprotein TpN32 (tpn32).